The following is a 477-amino-acid chain: Trigger factor (477 aa).

The region spanning 169-254 (EDRVTIDYLG…VKEVAKPNEL (86 aa)) is the PPIase FKBP-type domain. The tract at residues 435 to 477 (VSKEELTAEDEDAASEAKPAKKAAPKKKAAPKKKADEGKSEEA) is disordered. Residues 454 to 466 (AKKAAPKKKAAPK) show a composition bias toward basic residues. The segment covering 467–477 (KKADEGKSEEA) has biased composition (basic and acidic residues).

The protein belongs to the FKBP-type PPIase family. Tig subfamily.

Its subcellular location is the cytoplasm. The catalysed reaction is [protein]-peptidylproline (omega=180) = [protein]-peptidylproline (omega=0). Involved in protein export. Acts as a chaperone by maintaining the newly synthesized protein in an open conformation. Functions as a peptidyl-prolyl cis-trans isomerase. The protein is Trigger factor of Brucella anthropi (strain ATCC 49188 / DSM 6882 / CCUG 24695 / JCM 21032 / LMG 3331 / NBRC 15819 / NCTC 12168 / Alc 37) (Ochrobactrum anthropi).